The sequence spans 356 residues: tRNA N6-adenosine threonylcarbamoyltransferase (356 aa).

2 residues coordinate Fe cation: His115 and His119. Residues 138-142, Asp171, Gly184, and Asn283 contribute to the substrate site; that span reads LVSGG. Fe cation is bound at residue Asp311.

Belongs to the KAE1 / TsaD family. Requires Fe(2+) as cofactor.

The protein localises to the cytoplasm. The catalysed reaction is L-threonylcarbamoyladenylate + adenosine(37) in tRNA = N(6)-L-threonylcarbamoyladenosine(37) in tRNA + AMP + H(+). In terms of biological role, required for the formation of a threonylcarbamoyl group on adenosine at position 37 (t(6)A37) in tRNAs that read codons beginning with adenine. Is involved in the transfer of the threonylcarbamoyl moiety of threonylcarbamoyl-AMP (TC-AMP) to the N6 group of A37, together with TsaE and TsaB. TsaD likely plays a direct catalytic role in this reaction. This chain is tRNA N6-adenosine threonylcarbamoyltransferase, found in Prochlorococcus marinus (strain MIT 9313).